The primary structure comprises 679 residues: Transketolase (679 aa).

A substrate-binding site is contributed by H30. Thiamine diphosphate contacts are provided by residues H69 and 116–118; that span reads GPL. Position 157 (D157) interacts with Mg(2+). Residues G158 and N187 each contribute to the thiamine diphosphate site. 2 residues coordinate Mg(2+): N187 and I189. Substrate contacts are provided by H262, R358, and S385. H262 is a thiamine diphosphate binding site. E417 and F444 together coordinate thiamine diphosphate. The Proton donor role is filled by E417. 3 residues coordinate substrate: H468, D476, and R527.

This sequence belongs to the transketolase family. In terms of assembly, homodimer. Mg(2+) serves as cofactor. Requires Ca(2+) as cofactor. It depends on Mn(2+) as a cofactor. Co(2+) is required as a cofactor. The cofactor is thiamine diphosphate.

The catalysed reaction is D-sedoheptulose 7-phosphate + D-glyceraldehyde 3-phosphate = aldehydo-D-ribose 5-phosphate + D-xylulose 5-phosphate. Its function is as follows. Catalyzes the transfer of a two-carbon ketol group from a ketose donor to an aldose acceptor, via a covalent intermediate with the cofactor thiamine pyrophosphate. The sequence is that of Transketolase (TKL1) from Kluyveromyces lactis (strain ATCC 8585 / CBS 2359 / DSM 70799 / NBRC 1267 / NRRL Y-1140 / WM37) (Yeast).